Reading from the N-terminus, the 173-residue chain is MPRSNRNDNFIDKSFTVMADLIVKLLPINARSKEAYVYYRDGLSAQNDGDYAEALENYDEALKLETDPTDRGETLKNMAIIYMSNGEEERAIETYQKALDENPKQPSCLKNMGLIFEKWGRIAEESGQQDDADRWFDQAADVWTQAVRLNPGGYLDIENWLKSTGRSNVDVYF.

3 TPR repeats span residues 35–68, 72–105, and 120–153; these read AYVY…ETDP, GETL…NPKQ, and GRIA…NPGG.

The protein belongs to the Ycf3 family.

The protein localises to the cellular thylakoid membrane. Its function is as follows. Essential for the assembly of the photosystem I (PSI) complex. May act as a chaperone-like factor to guide the assembly of the PSI subunits. The protein is Photosystem I assembly protein Ycf3 of Synechococcus sp. (strain CC9902).